Consider the following 407-residue polypeptide: Phosphopentomutase (407 aa).

Residues Asp-10, Asp-306, His-311, Asp-347, His-348, and His-359 each coordinate Mn(2+).

The protein belongs to the phosphopentomutase family. Mn(2+) serves as cofactor.

Its subcellular location is the cytoplasm. It catalyses the reaction 2-deoxy-alpha-D-ribose 1-phosphate = 2-deoxy-D-ribose 5-phosphate. It carries out the reaction alpha-D-ribose 1-phosphate = D-ribose 5-phosphate. Its pathway is carbohydrate degradation; 2-deoxy-D-ribose 1-phosphate degradation; D-glyceraldehyde 3-phosphate and acetaldehyde from 2-deoxy-alpha-D-ribose 1-phosphate: step 1/2. Isomerase that catalyzes the conversion of deoxy-ribose 1-phosphate (dRib-1-P) and ribose 1-phosphate (Rib-1-P) to deoxy-ribose 5-phosphate (dRib-5-P) and ribose 5-phosphate (Rib-5-P), respectively. The protein is Phosphopentomutase of Photorhabdus laumondii subsp. laumondii (strain DSM 15139 / CIP 105565 / TT01) (Photorhabdus luminescens subsp. laumondii).